We begin with the raw amino-acid sequence, 925 residues long: Probable replication restart protein PriA (925 aa).

Residues Cys645, Cys648, Cys654, Cys657, Cys672, Cys675, Cys685, and Cys688 each coordinate Zn(2+).

It belongs to the helicase family. PriA subfamily. Interacts with DnaB (DR_0549). Component of the replication restart primosome. Requires Zn(2+) as cofactor.

Initiates the restart of stalled replication forks, which reloads the replicative helicase on sites other than the origin of replication. Recognizes abandoned replication forks and remodels them to uncover a helicase loading site. Promotes assembly of the primosome at these replication forks. Recognizes and binds DNA at stalled replication forks, also binds single-stranded (ss)DNA. This Deinococcus radiodurans (strain ATCC 13939 / DSM 20539 / JCM 16871 / CCUG 27074 / LMG 4051 / NBRC 15346 / NCIMB 9279 / VKM B-1422 / R1) protein is Probable replication restart protein PriA.